A 479-amino-acid chain; its full sequence is MSHNLKQLFQQHNVKGLSINSKTVKDKDIFFAIKGRNTDGNDFIKDALSKGAVLVITDNKKNIVIDKVIYVKDVQAALYEAIEIFYPKKPKDLIAVTGTNGKSSVVSYIAQTYSLLGKKAASIGTIGVEIFGCVNLINDVPELTTLDYLSFRKIAHNLAENGIEYLVFEASSHGLDQARLREIKVNIACFTSFSQDHLDYHHTKENYLLAKLKLFINHLLPNGIAILNSDIEEIEFVKDYLHNHNVKFITVGTKGDLEITRLNCSLKGQNINFTFNNREYNFNTPIIGSFQASNLLIAVLSIHYIGFAFDDVIDSLVEVKAVKGRMERIDNTNIFVDYAHTPDALEKALTELKNIKLRDSKLSVVFGCGGNRDKAKRSLMGQIAAKRADTIIITDDNPRHEDPKLIRAEIISGIEKADYTEIANREEAIKYGINNLKQDDILLVAGKGHENYQIIGDKKLPFDDAEVVRKCIKVCHPVA.

S21 is a UDP-N-acetyl-alpha-D-muramoyl-L-alanyl-D-glutamate binding site. 98 to 104 is a binding site for ATP; the sequence is GTNGKSS. UDP-N-acetyl-alpha-D-muramoyl-L-alanyl-D-glutamate contacts are provided by residues 144–145, S171, Q177, and R179; that span reads TT. K211 bears the N6-carboxylysine mark. Meso-2,6-diaminopimelate contacts are provided by residues R372, 396 to 399, G446, and E450; that span reads DNPR. The short motif at 396–399 is the Meso-diaminopimelate recognition motif element; that stretch reads DNPR.

The protein belongs to the MurCDEF family. MurE subfamily. Mg(2+) serves as cofactor. Carboxylation is probably crucial for Mg(2+) binding and, consequently, for the gamma-phosphate positioning of ATP.

It localises to the cytoplasm. The catalysed reaction is UDP-N-acetyl-alpha-D-muramoyl-L-alanyl-D-glutamate + meso-2,6-diaminopimelate + ATP = UDP-N-acetyl-alpha-D-muramoyl-L-alanyl-gamma-D-glutamyl-meso-2,6-diaminopimelate + ADP + phosphate + H(+). It participates in cell wall biogenesis; peptidoglycan biosynthesis. Its function is as follows. Catalyzes the addition of meso-diaminopimelic acid to the nucleotide precursor UDP-N-acetylmuramoyl-L-alanyl-D-glutamate (UMAG) in the biosynthesis of bacterial cell-wall peptidoglycan. The sequence is that of UDP-N-acetylmuramoyl-L-alanyl-D-glutamate--2,6-diaminopimelate ligase from Rickettsia rickettsii.